A 187-amino-acid polypeptide reads, in one-letter code: Resolvase OPG149 (187 aa).

Belongs to the RuvC family. Poxviruses-type subfamily. Mg(2+) serves as cofactor.

Plays a role in DNA replication by cleaving viral DNA concatamers to yield unit-length viral genomes. The concatamer junctions contain inverted repeat sequences that can be extruded as cruciforms, yielding Holliday junctions that A22 protein cleaves. This chain is Resolvase OPG149 (OPG149), found in Cynomys gunnisoni (Gunnison's prairie dog).